Here is a 258-residue protein sequence, read N- to C-terminus: Imidazole glycerol phosphate synthase subunit HisF (258 aa).

Residues Asp-11 and Asp-130 contribute to the active site.

The protein belongs to the HisA/HisF family. Heterodimer of HisH and HisF.

Its subcellular location is the cytoplasm. It catalyses the reaction 5-[(5-phospho-1-deoxy-D-ribulos-1-ylimino)methylamino]-1-(5-phospho-beta-D-ribosyl)imidazole-4-carboxamide + L-glutamine = D-erythro-1-(imidazol-4-yl)glycerol 3-phosphate + 5-amino-1-(5-phospho-beta-D-ribosyl)imidazole-4-carboxamide + L-glutamate + H(+). Its pathway is amino-acid biosynthesis; L-histidine biosynthesis; L-histidine from 5-phospho-alpha-D-ribose 1-diphosphate: step 5/9. IGPS catalyzes the conversion of PRFAR and glutamine to IGP, AICAR and glutamate. The HisF subunit catalyzes the cyclization activity that produces IGP and AICAR from PRFAR using the ammonia provided by the HisH subunit. The protein is Imidazole glycerol phosphate synthase subunit HisF of Magnetococcus marinus (strain ATCC BAA-1437 / JCM 17883 / MC-1).